A 543-amino-acid polypeptide reads, in one-letter code: Chaperonin GroEL (543 aa).

ATP-binding positions include 29-32 (TIGP), 86-90 (DGTTT), Gly413, 478-480 (NAA), and Asp494.

The protein belongs to the chaperonin (HSP60) family. In terms of assembly, forms a cylinder of 14 subunits composed of two heptameric rings stacked back-to-back. Interacts with the co-chaperonin GroES.

Its subcellular location is the cytoplasm. It catalyses the reaction ATP + H2O + a folded polypeptide = ADP + phosphate + an unfolded polypeptide.. Together with its co-chaperonin GroES, plays an essential role in assisting protein folding. The GroEL-GroES system forms a nano-cage that allows encapsulation of the non-native substrate proteins and provides a physical environment optimized to promote and accelerate protein folding. The polypeptide is Chaperonin GroEL (Limosilactobacillus fermentum (strain NBRC 3956 / LMG 18251) (Lactobacillus fermentum)).